A 164-amino-acid chain; its full sequence is MCPQRQFQSFTTTAESTLSHTTHKQLSGATIYDEPENFLEIEVCNPKTHFPSGDAKGMYTDYEIICRTNLPGFSKRSSSVRRRYSDFELFRKLLIKELQLSNHPKVSVQHLPGKILLSNRFSDAVIEERRQGLNKWLASVAGHPLLQTGSKVLVRFIQDPTFQG.

In terms of domain architecture, PX spans 40-163; it reads EIEVCNPKTH…VRFIQDPTFQ (124 aa). Positions 83, 85, 114, 120, and 129 each coordinate a 1,2-diacyl-sn-glycero-3-phospho-(1D-myo-inositol-3-phosphate).

The protein belongs to the sorting nexin family.

Its subcellular location is the cytoplasm. The protein localises to the golgi apparatus membrane. It localises to the prevacuolar compartment membrane. In terms of biological role, required for retention of late Golgi membrane proteins. Component of the retrieval machinery that functions by direct interaction with the cytosolic tails of certain TGN membrane proteins during the sorting/budding process at the prevacuolar compartment. Binds phosphatidylinositol 3-phosphate (PtdIns(P3)). This is Sorting nexin-3 (SNX3) from Kluyveromyces lactis (strain ATCC 8585 / CBS 2359 / DSM 70799 / NBRC 1267 / NRRL Y-1140 / WM37) (Yeast).